Consider the following 214-residue polypeptide: NAD(P)H-quinone oxidoreductase subunit 6, chloroplastic (214 aa).

A run of 5 helical transmembrane segments spans residues 10-30 (FSLFFLEGAVLVGALGVVLLP), 32-52 (ILYSAFLLGGVLMSIAGIYLL), 61-81 (AQVLIYVGAINVLILFAIMLV), 102-122 (IIGLTCIGLAGFLIDMIVTTP), and 163-183 (LLPFEVISLLLLVTLVGAIVI).

Belongs to the complex I subunit 6 family. NDH is composed of at least 16 different subunits, 5 of which are encoded in the nucleus.

The protein localises to the plastid. The protein resides in the chloroplast thylakoid membrane. It carries out the reaction a plastoquinone + NADH + (n+1) H(+)(in) = a plastoquinol + NAD(+) + n H(+)(out). The catalysed reaction is a plastoquinone + NADPH + (n+1) H(+)(in) = a plastoquinol + NADP(+) + n H(+)(out). NDH shuttles electrons from NAD(P)H:plastoquinone, via FMN and iron-sulfur (Fe-S) centers, to quinones in the photosynthetic chain and possibly in a chloroplast respiratory chain. The immediate electron acceptor for the enzyme in this species is believed to be plastoquinone. Couples the redox reaction to proton translocation, and thus conserves the redox energy in a proton gradient. The sequence is that of NAD(P)H-quinone oxidoreductase subunit 6, chloroplastic (ndhG) from Chlorokybus atmophyticus (Soil alga).